A 991-amino-acid chain; its full sequence is Receptor-like protein kinase HAIKU2 (991 aa).

The N-terminal stretch at Met-1–Ser-19 is a signal peptide. The Extracellular segment spans residues Arg-20 to Met-616. Asn-22 is a glycosylation site (N-linked (GlcNAc...) asparagine). LRR repeat units lie at residues Asp-66–Asp-90, Leu-99–Cys-123, Arg-125–Leu-148, Glu-150–Asp-170, Leu-171–Leu-196, Thr-197–Leu-220, Val-221–Leu-244, Asn-246–Asn-267, Thr-269–Leu-291, Lys-292–Asp-314, Phe-315–Trp-339, Ala-341–Lys-363, Val-365–Cys-387, Lys-388–Leu-411, Asn-413–Ala-435, Lys-436–Ala-459, Ser-461–Lys-482, Leu-483–Thr-508, Leu-510–Leu-531, Lys-532–Ala-554, and Leu-555–Gly-578. N-linked (GlcNAc...) asparagine glycosylation is found at Asn-109, Asn-135, Asn-155, Asn-195, and Asn-206. N-linked (GlcNAc...) asparagine glycosylation is found at Asn-267 and Asn-278. Asn-397 and Asn-427 each carry an N-linked (GlcNAc...) asparagine glycan. An N-linked (GlcNAc...) asparagine glycan is attached at Asn-495. Residue Asn-538 is glycosylated (N-linked (GlcNAc...) asparagine). Residues Cys-617–Ile-637 form a helical membrane-spanning segment. The Cytoplasmic segment spans residues Arg-638–Val-991. Residues Ile-671 to Tyr-970 enclose the Protein kinase domain. ATP-binding positions include Ile-677 to Val-685 and Lys-699. Phosphotyrosine is present on residues Tyr-762 and Tyr-801. The active-site Proton acceptor is Asp-814. 2 positions are modified to phosphotyrosine: Tyr-859 and Tyr-866. Thr-867 bears the Phosphothreonine mark. The segment at Lys-972–Val-991 is disordered.

Belongs to the protein kinase superfamily. Ser/Thr protein kinase family. As to expression, expressed in the endosperm of fertilized ovules.

The protein resides in the membrane. It carries out the reaction L-seryl-[protein] + ATP = O-phospho-L-seryl-[protein] + ADP + H(+). The catalysed reaction is L-threonyl-[protein] + ATP = O-phospho-L-threonyl-[protein] + ADP + H(+). Modulates the seed size by negatively regulating the cellularization of syncytial endosperm. The chain is Receptor-like protein kinase HAIKU2 (IKU2) from Arabidopsis thaliana (Mouse-ear cress).